A 253-amino-acid chain; its full sequence is 3-deoxy-manno-octulosonate cytidylyltransferase (253 aa).

It belongs to the KdsB family.

The protein resides in the cytoplasm. It carries out the reaction 3-deoxy-alpha-D-manno-oct-2-ulosonate + CTP = CMP-3-deoxy-beta-D-manno-octulosonate + diphosphate. The protein operates within nucleotide-sugar biosynthesis; CMP-3-deoxy-D-manno-octulosonate biosynthesis; CMP-3-deoxy-D-manno-octulosonate from 3-deoxy-D-manno-octulosonate and CTP: step 1/1. It participates in bacterial outer membrane biogenesis; lipopolysaccharide biosynthesis. Activates KDO (a required 8-carbon sugar) for incorporation into bacterial lipopolysaccharide in Gram-negative bacteria. The chain is 3-deoxy-manno-octulosonate cytidylyltransferase from Edwardsiella ictaluri (strain 93-146).